A 286-amino-acid polypeptide reads, in one-letter code: Shikimate dehydrogenase (NADP(+)) (286 aa).

Shikimate-binding positions include 19 to 21 and Thr-66; that span reads SLS. The active-site Proton acceptor is the Lys-70. Shikimate is bound by residues Asn-91 and Asp-107. Residues 129-133 and Leu-229 each bind NADP(+); that span reads GSGGA. Residue Tyr-231 coordinates shikimate. Gly-252 provides a ligand contact to NADP(+).

The protein belongs to the shikimate dehydrogenase family. As to quaternary structure, homodimer.

It carries out the reaction shikimate + NADP(+) = 3-dehydroshikimate + NADPH + H(+). The protein operates within metabolic intermediate biosynthesis; chorismate biosynthesis; chorismate from D-erythrose 4-phosphate and phosphoenolpyruvate: step 4/7. In terms of biological role, involved in the biosynthesis of the chorismate, which leads to the biosynthesis of aromatic amino acids. Catalyzes the reversible NADPH linked reduction of 3-dehydroshikimate (DHSA) to yield shikimate (SA). This chain is Shikimate dehydrogenase (NADP(+)), found in Prochlorococcus marinus (strain MIT 9215).